The sequence spans 335 residues: MKKYLLIIIGVTLVLILLWWAGIERTIKLMMRADIRFILLAILMYCISVLIWAVRWNTFLKGANINVSFVKVIEGVFIGIFLNNLTPGARTGGEAVKVIFIKKASSNGSYSKVFATVIADRILDVIPVVVFMMLAFLYALTIHARVLLIILGISAIILVIILLMTTVFSIKEKYALSALLYLARIFRKIFPSKFSMSEDKIKEKLLGEIREFKETFLRLAKRKRRLSSTMLYSFILWGADILKTYFIFLSLGGRITFLQVLLVRMASIAVAMISVIPGGIGITEVVQSALFLAVGVEKALAVSVTMLDRLISFWIPTLLGGILVLKNRKLLVSSS.

8 consecutive transmembrane segments (helical) span residues 4 to 24, 34 to 54, 62 to 82, 122 to 142, 148 to 168, 231 to 251, 266 to 286, and 304 to 324; these read YLLI…AGIE, DIRF…IWAV, GANI…GIFL, ILDV…ALTI, LIIL…TTVF, LYSF…FLSL, ASIA…TEVV, and VTML…GILV.

This sequence belongs to the UPF0104 family.

The protein localises to the cell membrane. The chain is UPF0104 membrane protein PH1989 from Pyrococcus horikoshii (strain ATCC 700860 / DSM 12428 / JCM 9974 / NBRC 100139 / OT-3).